Consider the following 397-residue polypeptide: HTH-type transcriptional regulator GalR (397 aa).

2 HTH lysR-type domains span residues 7 to 64 (PNLM…MRLT) and 99 to 156 (FQAR…LQPT). 2 DNA-binding regions (H-T-H motif) span residues 24–43 (VSRA…RAIA) and 116–135 (MQTV…AALK).

The protein belongs to the LysR transcriptional regulatory family.

Functionally, transcriptional regulator for the galBCD and galTAP operons, encoding genes of the gallate degradation pathway. The protein is HTH-type transcriptional regulator GalR (galR) of Pseudomonas putida (strain ATCC 47054 / DSM 6125 / CFBP 8728 / NCIMB 11950 / KT2440).